The sequence spans 299 residues: Phosphatidylinositol-3-phosphatase (299 aa).

The first 43 residues, 1–43 (MLRGIQALSRPLTRVYRALAVIGVLAASLLASWVGAVPQVGLA), serve as a signal peptide directing secretion.

In terms of assembly, monomer. SapM interacts with host RAB7 via its C-terminus. Requires a metal cation as cofactor.

The protein localises to the secreted. It localises to the host cytoplasmic vesicle. It is found in the host phagosome. The catalysed reaction is a phosphate monoester + H2O = an alcohol + phosphate. It catalyses the reaction a 1,2-diacyl-sn-glycero-3-phospho-(1D-myo-inositol-3-phosphate) + H2O = a 1,2-diacyl-sn-glycero-3-phospho-(1D-myo-inositol) + phosphate. Phosphatase activity is inhibited in vitro by low concentrations of several heavy metals (zinc chloride, sodium molybdate, magnesium chloride, and copper sulfate) and moderately high concentrations (&gt;8 mM) of EDTA. Its function is as follows. Virulence factor that plays an important role in blocking phagosome-lysosome fusion and thus participates in the intracellular survival of the pathogen. Acts as a phosphatase that dephosphorylates phosphatidylinositol 3-phosphate (PI3P), a membrane trafficking regulatory lipid essential for phagosomal acquisition of lysosomal constituents. Therefore, SapM eliminates PI3P from the phagosomal membrane by catalyzing its hydrolysis, and thus contributes to inhibition of phagosome maturation. Also interferes with autophagy: SapM blocks autophagosome-lysosome fusion in macrophages by binding to the small GTPase RAB7, which prevents RAB7 from being involved in this process and thus negatively regulates autophagy flux. In vitro, displays phosphatase activity with broad specificity; can dephosphorylate a variety of phosphoester substrates, with the highest activity against phosphoenolpyruvate, glycerophosphate, GTP, NADPH, phosphotyrosine and trehalose-6-phosphate. In contrast, the enzyme exhibits poor activity against glucose-6-phosphate, phosphothreonine, and a number of nucleotides (NADP, ATP, AMP, and GMP). The chain is Phosphatidylinositol-3-phosphatase from Mycobacterium tuberculosis (strain ATCC 25618 / H37Rv).